A 368-amino-acid polypeptide reads, in one-letter code: C2H2 type master regulator of conidiophore development BrlA (368 aa).

Residues 268-292 form a C2H2-type 1; degenerate zinc finger; the sequence is CKCDYPGCHKAFRRNEHLKRHKQTF. The C2H2-type 2 zinc finger occupies 300–323; that stretch reads FSCEFCGKDQFNRQDNLNNHRKLH. Positions 338–368 are disordered; the sequence is AAVPIIEQEERSRKRRAPPKSKSADKRVDDY. The segment covering 359-368 has biased composition (basic and acidic residues); that stretch reads KSADKRVDDY.

It localises to the nucleus. BrlA, abaA and wetA are pivotal regulators of conidiophore development and conidium maturation. They act individually and together to regulate their own expression and that of numerous other sporulation-specific genes. BrlA, abaA and wetA act together to positively regulate the expression of the Pks1 gene cluster that mediates the biosynthesis of an anthraquinone derivative pigment that contributes to conidial pigmentation that provides protection from UV radiation, heat and cold stress. The chain is C2H2 type master regulator of conidiophore development BrlA from Metarhizium robertsii (strain ARSEF 23 / ATCC MYA-3075) (Metarhizium anisopliae (strain ARSEF 23)).